Here is a 205-residue protein sequence, read N- to C-terminus: High frequency lysogenization protein HflD homolog (205 aa).

The protein belongs to the HflD family.

The protein resides in the cytoplasm. It is found in the cell inner membrane. This is High frequency lysogenization protein HflD homolog from Vibrio campbellii (strain ATCC BAA-1116).